The primary structure comprises 156 residues: Small ribosomal subunit protein uS7 (156 aa).

Belongs to the universal ribosomal protein uS7 family. In terms of assembly, part of the 30S ribosomal subunit. Contacts proteins S9 and S11.

Functionally, one of the primary rRNA binding proteins, it binds directly to 16S rRNA where it nucleates assembly of the head domain of the 30S subunit. Is located at the subunit interface close to the decoding center, probably blocks exit of the E-site tRNA. The chain is Small ribosomal subunit protein uS7 from Ligilactobacillus salivarius (strain UCC118) (Lactobacillus salivarius).